A 334-amino-acid polypeptide reads, in one-letter code: Tryptophan--tRNA ligase (334 aa).

ATP-binding positions include 11-13 (QPS) and 19-20 (GN). The 'HIGH' region motif lies at 12-20 (PSGELTIGN). D135 provides a ligand contact to L-tryptophan. Residues 147-149 (GED), V186, and 195-199 (KMSKS) each bind ATP. The short motif at 195–199 (KMSKS) is the 'KMSKS' region element.

The protein belongs to the class-I aminoacyl-tRNA synthetase family. As to quaternary structure, homodimer.

It localises to the cytoplasm. It carries out the reaction tRNA(Trp) + L-tryptophan + ATP = L-tryptophyl-tRNA(Trp) + AMP + diphosphate + H(+). In terms of biological role, catalyzes the attachment of tryptophan to tRNA(Trp). The protein is Tryptophan--tRNA ligase of Shigella flexneri.